The following is a 121-amino-acid chain: Holo-[acyl-carrier-protein] synthase (121 aa).

Mg(2+) is bound by residues Asp-8 and Glu-58.

It belongs to the P-Pant transferase superfamily. AcpS family. Mg(2+) is required as a cofactor.

It is found in the cytoplasm. The enzyme catalyses apo-[ACP] + CoA = holo-[ACP] + adenosine 3',5'-bisphosphate + H(+). Transfers the 4'-phosphopantetheine moiety from coenzyme A to a Ser of acyl-carrier-protein. The protein is Holo-[acyl-carrier-protein] synthase of Bacillus velezensis (strain DSM 23117 / BGSC 10A6 / LMG 26770 / FZB42) (Bacillus amyloliquefaciens subsp. plantarum).